A 263-amino-acid polypeptide reads, in one-letter code: Aquaporin Lacbi1:247946 (263 aa).

Residues 1-18 (MKLTISHHKCAIRKVMAE) lie on the Cytoplasmic side of the membrane. Residues 19 to 39 (FVGVALLVIFGAGTACQVVLS) form a helical membrane-spanning segment. The Extracellular segment spans residues 40–45 (TNPSSF). The helical transmembrane segment at 46–66 (LSINFGWAIGIATGAWVSAGI) threads the bilayer. The Cytoplasmic segment spans residues 67–89 (SGGHINPAITIAMATYRGFPWRE). Residues 72–74 (NPA) carry the NPA 1 motif. Residues 90-110 (VPGYIFAQALGGFVGAALVYA) form a helical membrane-spanning segment. The Extracellular segment spans residues 111 to 143 (NYFHAIDIFEGGHIRTQATASLFATFALPYMTQ). The helical transmembrane segment at 144 to 164 (ASCFFSEFLATAVLFIVFLAL) threads the bilayer. Over 165-169 (NDKHN) the chain is Cytoplasmic. A helical transmembrane segment spans residues 170-190 (GALTNGLLPFALFILFIGLGA). Residues 191-227 (SLGMQTGYAVNPARDFGPRLFLAMAGYGKAVFNYRRQ) lie on the Extracellular side of the membrane. The short motif at 201–203 (NPA) is the NPA 2 element. The helical transmembrane segment at 228–248 (YWIWAPIIAPILGAQAGGLLY) threads the bilayer. Topologically, residues 249-263 (DTSIYNGDDSPIKWR) are cytoplasmic.

This sequence belongs to the MIP/aquaporin (TC 1.A.8) family.

It localises to the membrane. The enzyme catalyses H2O(in) = H2O(out). Functionally, water channel required to facilitate the transport of water across membranes. Shows low but significant water conductivity, but no glycerol nor ammonium transport activities. The polypeptide is Aquaporin Lacbi1:247946 (Laccaria bicolor (strain S238N-H82 / ATCC MYA-4686) (Bicoloured deceiver)).